A 116-amino-acid chain; its full sequence is C-C motif chemokine 6 (116 aa).

The N-terminal stretch at 1-21 (MRNSKTAISFFILVAVLGSQA) is a signal peptide. 3 disulfides stabilise this stretch: cysteine 50-cysteine 73, cysteine 51-cysteine 89, and cysteine 60-cysteine 100.

This sequence belongs to the intercrine beta (chemokine CC) family. In terms of processing, the N-terminal is proteolytically cleaved by proteases associated with inflammatory responses. The processed forms CL6(22-95) and CCL6(23-95) show increase in CCR1-mediated signaling and chemotaxis assays in vitro. As to expression, expressed in myelopoietic bone marrow cultures stimulated by GM-CSF.

The protein localises to the secreted. In terms of biological role, chemotactic factor that attracts mostly macrophage, but it can also attract B cells, CD4(+) lymphocytes and eosinophils. The sequence is that of C-C motif chemokine 6 (Ccl6) from Mus musculus (Mouse).